The chain runs to 286 residues: Ribosomal RNA small subunit methyltransferase H (286 aa).

Residues 17-19 (AGH), Asp36, Phe63, Asp84, and Gln91 each bind S-adenosyl-L-methionine.

This sequence belongs to the methyltransferase superfamily. RsmH family.

The protein resides in the cytoplasm. The catalysed reaction is cytidine(1402) in 16S rRNA + S-adenosyl-L-methionine = N(4)-methylcytidine(1402) in 16S rRNA + S-adenosyl-L-homocysteine + H(+). In terms of biological role, specifically methylates the N4 position of cytidine in position 1402 (C1402) of 16S rRNA. This Metamycoplasma arthritidis (strain 158L3-1) (Mycoplasma arthritidis) protein is Ribosomal RNA small subunit methyltransferase H.